Consider the following 549-residue polypeptide: Cilia- and flagella-associated protein 45 (549 aa).

Residues 1 to 27 (MPLSTAGVLSSASTASNRSRNRPRYRT) form a disordered region. Coiled coils occupy residues 119-232 (KEEL…MMEV) and 259-393 (IVEQ…KRNQ). The interval 391 to 416 (RNQEVADREWRRKEKENAQKKMETEA) is disordered.

Belongs to the CFAP45 family. Microtubule inner protein component of sperm flagellar doublet microtubules. Interacts with AK8; dimerization with AK8 may create a cavity at the interface of the dimer that can accommodate AMP. Interacts with CFAP52. Interacts with ENKUR. Directly interacts with DNALI1. Interacts with DNAH11. Interacts with DNAI1. As to expression, expressed in trachea multiciliated cells.

The protein localises to the cytoplasm. Its subcellular location is the cytoskeleton. The protein resides in the cilium axoneme. It localises to the flagellum axoneme. It is found in the cell projection. The protein localises to the cilium. Its subcellular location is the flagellum. Functionally, microtubule inner protein (MIP) part of the dynein-decorated doublet microtubules (DMTs) in cilia axoneme, which is required for motile cilia beating. It is an AMP-binding protein that may facilitate dynein ATPase-dependent ciliary and flagellar beating via adenine nucleotide homeostasis. May function as a donor of AMP to AK8 and hence promote ADP production. The chain is Cilia- and flagella-associated protein 45 from Bos taurus (Bovine).